The primary structure comprises 201 residues: Ribonuclease HII (201 aa).

Positions 12–201 (DLVAGVDEVG…VRELLDVSVQ (190 aa)) constitute an RNase H type-2 domain. The a divalent metal cation site is built by D18, E19, and D110.

This sequence belongs to the RNase HII family. Requires Mn(2+) as cofactor. It depends on Mg(2+) as a cofactor.

The protein resides in the cytoplasm. It catalyses the reaction Endonucleolytic cleavage to 5'-phosphomonoester.. Functionally, endonuclease that specifically degrades the RNA of RNA-DNA hybrids. The protein is Ribonuclease HII of Pseudomonas aeruginosa (strain ATCC 15692 / DSM 22644 / CIP 104116 / JCM 14847 / LMG 12228 / 1C / PRS 101 / PAO1).